The chain runs to 704 residues: Preterpestacin I synthase tpcA (704 aa).

The tract at residues 1-329 is terpene cyclase; sequence MEQLSYQSKL…CSACPRQNAW (329 aa). Mg(2+) is bound at residue Asp96. Substrate is bound by residues Asp96, Asn231, 235–239, and 325–326; these read SWERE and RQ. The DDXXD 1 motif lies at 96 to 100; the sequence is DDGGE. Positions 231–239 match the NSE/DTE motif; that stretch reads NDYFSWERE. Positions 330–688 are prenyltransferase; that stretch reads KDMSSQSLNG…MLRLCLAKLS (359 aa). The disordered stretch occupies residues 361 to 380; that stretch reads KDSSFFGSQPSDDEPSLSEV. Isopentenyl diphosphate is bound by residues Lys406, Arg409, and His438. Residues Asp445 and Asp449 each contribute to the Mg(2+) site. A DDXXD 2 motif is present at residues 445–449; sequence DDLED. Residue Arg454 coordinates dimethylallyl diphosphate. Position 455 (Arg455) interacts with isopentenyl diphosphate. Positions 532, 533, 568, 575, 583, and 593 each coordinate dimethylallyl diphosphate.

In the N-terminal section; belongs to the terpene synthase family. It in the C-terminal section; belongs to the FPP/GGPP synthase family. As to quaternary structure, hexamer. Mg(2+) serves as cofactor.

It catalyses the reaction isopentenyl diphosphate + (2E,6E)-farnesyl diphosphate = (2E,6E,10E)-geranylgeranyl diphosphate + diphosphate. The catalysed reaction is isopentenyl diphosphate + (2E,6E,10E)-geranylgeranyl diphosphate = (2E,6E,10E,14E)-geranylfarnesyl diphosphate + diphosphate. The protein operates within secondary metabolite biosynthesis; terpenoid biosynthesis. Functionally, bifunctional terpene synthase; part of the gene cluster that mediates the biosynthesis of terpestacin. The bifunctional terpene synthase tpcA converts isopentenyl diphosphate (IPP) and dimethylallyl diphosphate (DMAPP) into the sesterterpene preterpestacin I. The C-terminal prenyltransferase (PT) domain of tpcA catalyzes formation of GFPP, whereas the N-terminal terpene cyclase (TC) domain catalyzes the cyclization of GFPP into preterpestacin I. The cytochrome P450 monooxygenase tpcB then hydroxylates preterpestacin I to yield 24-hydroxypreterpstacin I (renamed as preterpestacin II) whereas the cytochrome P450 monooxygenase tpcC further hydroxylates preterpestacin II to yield 16,17-dihydroxypreterpestacin II (renamed as preterpestacin III). Finally, the FAD-dependent monooxygenase tpcD converts preterpestacin III into terpestacin. The protein is Preterpestacin I synthase tpcA of Cochliobolus heterostrophus (strain C5 / ATCC 48332 / race O) (Southern corn leaf blight fungus).